We begin with the raw amino-acid sequence, 463 residues long: Sodium-coupled neutral amino acid transporter 7 (463 aa).

S28 is subject to Phosphoserine. Helical transmembrane passes span 56–76, 82–102, 130–150, 179–199, 206–226, 240–260, 283–303, 320–340, 372–392, 396–416, and 429–449; these read AIFI…PAAF, VAAG…GLVI, LCEV…LIII, FTIS…REIG, FLSV…YIWP, ASWI…QCHV, AAMV…FLTF, MAVA…YPIL, VLQT…IPDI, ISVI…LCLI, and ASWW…AFIF.

It belongs to the amino acid/polyamine transporter 2 family. In terms of assembly, interacts with the mTORC1 complex; this interaction mediates the recruitment of mTORC1 to the lysosome and its subsequent activation.

Its subcellular location is the lysosome membrane. It localises to the cell projection. The protein localises to the axon. The catalysed reaction is L-asparagine(in) + Na(+)(in) = L-asparagine(out) + Na(+)(out). It carries out the reaction L-glutamine(in) + Na(+)(in) = L-glutamine(out) + Na(+)(out). In terms of biological role, symporter that selectively cotransports sodium ions and amino acids, such as L-glutamine and L-asparagine from the lysosome into the cytoplasm and may participates in mTORC1 activation. The transport activity requires an acidic lysosomal lumen. This chain is Sodium-coupled neutral amino acid transporter 7, found in Bos taurus (Bovine).